Consider the following 401-residue polypeptide: cAMP-dependent protein kinase type II-alpha regulatory subunit (401 aa).

An N-acetylserine modification is found at Ser-2. Positions Ser-2 to Leu-135 are dimerization and phosphorylation. 4 positions are modified to phosphoserine: Ser-47, Ser-74, Ser-76, and Ser-96. The tract at residues Glu-61–Leu-83 is disordered. Residues Ile-68 to Leu-83 show a composition bias toward acidic residues. 3',5'-cyclic AMP-binding positions include Leu-136–Pro-257, Glu-205, Arg-214, Leu-258–Gln-401, Glu-335, and Arg-344. Thr-212 carries the post-translational modification Phosphothreonine; by PDPK1. Phosphoserine occurs at positions 347 and 392.

This sequence belongs to the cAMP-dependent kinase regulatory chain family. In terms of assembly, the inactive form of the enzyme is composed of two regulatory chains and two catalytic chains. Activation by cAMP produces two active catalytic monomers and a regulatory dimer that binds four cAMP molecules. Interacts with AKAP4. Interacts with CBFA2T3. Interacts with the phosphorylated form of PJA2. Interacts with MYRIP. This interaction may link PKA to components of the exocytosis machinery, thus facilitating exocytosis, including insulin release. Forms a complex composed of PRKAR2A, GSK3B and GSKIP through GSKIP interaction; facilitates PKA-induced phosphorylation and regulates GSK3B activity. Interacts with ADCY8; inhibits adenylate cyclase activity through PKA phosphorylation. Post-translationally, phosphorylated by the activated catalytic chain. As to expression, four types of regulatory chains are found: I-alpha, I-beta, II-alpha, and II-beta. Their expression varies among tissues and is in some cases constitutive and in others inducible.

The protein localises to the cytoplasm. Its subcellular location is the cell membrane. Regulatory subunit of the cAMP-dependent protein kinases involved in cAMP signaling in cells. Type II regulatory chains mediate membrane association by binding to anchoring proteins, including the MAP2 kinase. This Mus musculus (Mouse) protein is cAMP-dependent protein kinase type II-alpha regulatory subunit (Prkar2a).